Reading from the N-terminus, the 156-residue chain is Lipoprotein signal peptidase (156 aa).

Transmembrane regions (helical) follow at residues 52–72 (ILEG…IGIV) and 85–105 (FATA…DRIF). Catalysis depends on residues aspartate 111 and aspartate 129. Residues 121–141 (NFPIFNVADSALCVGVGILFL) form a helical membrane-spanning segment.

This sequence belongs to the peptidase A8 family.

The protein resides in the cell membrane. The catalysed reaction is Release of signal peptides from bacterial membrane prolipoproteins. Hydrolyzes -Xaa-Yaa-Zaa-|-(S,diacylglyceryl)Cys-, in which Xaa is hydrophobic (preferably Leu), and Yaa (Ala or Ser) and Zaa (Gly or Ala) have small, neutral side chains.. The protein operates within protein modification; lipoprotein biosynthesis (signal peptide cleavage). Functionally, this protein specifically catalyzes the removal of signal peptides from prolipoproteins. The polypeptide is Lipoprotein signal peptidase (Halalkalibacterium halodurans (strain ATCC BAA-125 / DSM 18197 / FERM 7344 / JCM 9153 / C-125) (Bacillus halodurans)).